The primary structure comprises 781 residues: Coiled-coil and C2 domain-containing protein 1-like (781 aa).

5 disordered regions span residues 32–63 (MGRVSRPAAPARGAPPAARGRPAPAAPANVPG), 94–134 (ELNG…APNS), 187–296 (ESEI…AKES), 313–373 (CSAD…TEGN), and 403–447 (GELP…VEGK). A compositionally biased stretch (low complexity) spans 37 to 59 (RPAAPARGAPPAARGRPAPAAPA). The span at 98–107 (LVGGGGGGGA) shows a compositional bias: gly residues. Low complexity predominate over residues 108-118 (APTVPTRAAPR). 2 stretches are compositionally biased toward pro residues: residues 119–129 (APGPSGPPPSA) and 204–222 (PLPPPAPTAQPAHHPPAPP). Residues 244–256 (APAPTAAAPPATK) are compositionally biased toward low complexity. Over residues 269–280 (ILHHRRDLHKQN) the composition is skewed to basic residues. A compositionally biased stretch (basic and acidic residues) spans 285–296 (IADKDKESAKES). Over residues 324–341 (PPSPPPYRKPAPPQPQAP) the composition is skewed to pro residues. Positions 363–373 (KMAEKAKTEGN) are enriched in basic and acidic residues. One can recognise a C2 domain in the interval 605 to 741 (YEMRQIPSAD…EHSAEMEESL (137 aa)).

The protein belongs to the CC2D1 family.

This is Coiled-coil and C2 domain-containing protein 1-like from Caenorhabditis elegans.